Consider the following 193-residue polypeptide: SSVNARPCSSPLVCPAKGEKFFGVGSASRIRQLPPRLAWCSIDWDQLCLLHLLGSGGFGSVYKATYHGATVAVKQVKKCSKNHLASRQSFWAELNVACLDHNNVVHIVAASTCTPTSQDSLGTIIMEYAGNCTLHHVIYGIGYLTGNNDGLKRDHEFLSTAQAVVYSCDIVAGLMFLHSQLIVHLDLKPANIF.

The region spanning 47-193 is the Protein kinase domain; the sequence is LCLLHLLGSG…HLDLKPANIF (147 aa). Residues 53–61 and Lys-74 contribute to the ATP site; that span reads LGSGGFGSV. Asp-186 serves as the catalytic Proton acceptor.

The protein belongs to the protein kinase superfamily. Ser/Thr protein kinase family.

The enzyme catalyses L-seryl-[protein] + ATP = O-phospho-L-seryl-[protein] + ADP + H(+). It carries out the reaction L-threonyl-[protein] + ATP = O-phospho-L-threonyl-[protein] + ADP + H(+). This is Serine/threonine-protein kinase mos (MOS) from Sibon nebulatus (Cloudy snail-eating snake).